A 394-amino-acid chain; its full sequence is 8-amino-7-oxononanoate synthase (394 aa).

Arginine 21 is a binding site for substrate. Residue 112–113 (GY) participates in pyridoxal 5'-phosphate binding. Histidine 137 is a substrate binding site. The pyridoxal 5'-phosphate site is built by serine 183, histidine 211, and threonine 239. At lysine 242 the chain carries N6-(pyridoxal phosphate)lysine. Threonine 358 is a binding site for substrate.

It belongs to the class-II pyridoxal-phosphate-dependent aminotransferase family. BioF subfamily. In terms of assembly, homodimer. Pyridoxal 5'-phosphate serves as cofactor.

It catalyses the reaction 6-carboxyhexanoyl-[ACP] + L-alanine + H(+) = (8S)-8-amino-7-oxononanoate + holo-[ACP] + CO2. It participates in cofactor biosynthesis; biotin biosynthesis. In terms of biological role, catalyzes the decarboxylative condensation of pimeloyl-[acyl-carrier protein] and L-alanine to produce 8-amino-7-oxononanoate (AON), [acyl-carrier protein], and carbon dioxide. This is 8-amino-7-oxononanoate synthase from Paraburkholderia xenovorans (strain LB400).